Consider the following 297-residue polypeptide: Probable ABC transporter phosphite binding protein PhnD1 (297 aa).

An N-terminal signal peptide occupies residues Met1–Ser24.

This sequence belongs to the phosphate/phosphite/phosphonate binding protein family. The complex may be composed of two ATP-binding proteins (PhnC1), two transmembrane proteins (PhnE1) and a solute-binding protein (PhnD1).

The protein resides in the periplasm. Functionally, probably part of the ABC transporter complex PhnD1C1E1. Binds strongly to inorganic phosphite and with very weak affinities to methylphosphonate (MPn) and phosphate. This Prochlorococcus marinus (strain MIT 9301) protein is Probable ABC transporter phosphite binding protein PhnD1.